We begin with the raw amino-acid sequence, 2189 residues long: Chromatin modification-related protein eaf-1 (2189 aa).

3 disordered regions span residues 183-400 (VQGS…SGAE), 415-438 (VIGKAGVAGPHGAHSTGGLQTQHP), and 477-601 (EVAK…PPGL). Residues 234–253 (PTPQTVAPPATAPTSTTKTA) show a composition bias toward low complexity. Positions 260-277 (AGPKDDTVSRGDAEEKAR) are enriched in basic and acidic residues. Composition is skewed to polar residues over residues 281-293 (TITSVNQLLSNGD), 300-312 (TLSSPSSTVQSAP), and 319-333 (ASASTSPDNEASQSF). Residues 336-349 (PVSRPEQELRRATT) show a composition bias toward basic and acidic residues. The segment covering 534–543 (QPQPSSTAPS) has biased composition (low complexity). The span at 573–583 (ETQARTSQSSH) shows a compositional bias: polar residues. Residues 722 to 797 (PVRCLEPARP…PPVRAVDNAD (76 aa)) enclose the HSA domain. The Myb-like domain occupies 985 to 1045 (FESRIASQWT…ECFERWVNLE (61 aa)). Low complexity-rich tracts occupy residues 1320–1330 (VAVQLQQQQHQ) and 1336–1406 (QHPQ…QVTQ). 4 disordered regions span residues 1320–1428 (VAVQ…PMRP), 1622–1644 (MQTQTPAHQPHQPQAQPHVQAQA), 1663–1831 (QKQA…GQVQ), and 1846–2189 (VQGQ…APTK). 5 stretches are compositionally biased toward low complexity: residues 1663 to 1808 (QKQA…QGQG), 1818 to 1831 (GQGHAQGQVQGQVQ), 1846 to 1863 (VQGQVQGQAPGQVQPQHA), 1873 to 2089 (QHAQ…QPQQ), and 2097 to 2189 (SQPQ…APTK).

The protein belongs to the EAF1 family. In terms of assembly, component of the NuA4 histone acetyltransferase complex.

It localises to the nucleus. In terms of biological role, component of the NuA4 histone acetyltransferase complex which is involved in transcriptional activation of selected genes principally by acetylation of nucleosomal histone H4 and H2A. The NuA4 complex is also involved in DNA repair. The chain is Chromatin modification-related protein eaf-1 (eaf-1) from Neurospora crassa (strain ATCC 24698 / 74-OR23-1A / CBS 708.71 / DSM 1257 / FGSC 987).